Here is a 101-residue protein sequence, read N- to C-terminus: uncharacterized protein (101 aa).

A signal peptide spans 1–21 (MKLSTCCAALLLALASPAVLA). The span at 79–94 (RTTSGNVSAPAQSSQD) shows a compositional bias: polar residues. The disordered stretch occupies residues 79-101 (RTTSGNVSAPAQSSQDGAPAEPQ).

This is an uncharacterized protein from Escherichia coli (strain K12).